We begin with the raw amino-acid sequence, 444 residues long: Trigger factor (444 aa).

Residues 160–245 (DMQVTFDFEG…VKQVEKPKLP (86 aa)) enclose the PPIase FKBP-type domain.

It belongs to the FKBP-type PPIase family. Tig subfamily.

It is found in the cytoplasm. It catalyses the reaction [protein]-peptidylproline (omega=180) = [protein]-peptidylproline (omega=0). In terms of biological role, involved in protein export. Acts as a chaperone by maintaining the newly synthesized protein in an open conformation. Functions as a peptidyl-prolyl cis-trans isomerase. The sequence is that of Trigger factor from Acinetobacter baumannii (strain SDF).